Here is a 437-residue protein sequence, read N- to C-terminus: Methylenetetrahydrofolate--tRNA-(uracil-5-)-methyltransferase TrmFO (437 aa).

Residue 9–14 (GGGLAG) coordinates FAD.

The protein belongs to the MnmG family. TrmFO subfamily. FAD serves as cofactor.

The protein resides in the cytoplasm. The enzyme catalyses uridine(54) in tRNA + (6R)-5,10-methylene-5,6,7,8-tetrahydrofolate + NADH + H(+) = 5-methyluridine(54) in tRNA + (6S)-5,6,7,8-tetrahydrofolate + NAD(+). It catalyses the reaction uridine(54) in tRNA + (6R)-5,10-methylene-5,6,7,8-tetrahydrofolate + NADPH + H(+) = 5-methyluridine(54) in tRNA + (6S)-5,6,7,8-tetrahydrofolate + NADP(+). Catalyzes the folate-dependent formation of 5-methyl-uridine at position 54 (M-5-U54) in all tRNAs. The protein is Methylenetetrahydrofolate--tRNA-(uracil-5-)-methyltransferase TrmFO of Moorella thermoacetica (strain ATCC 39073 / JCM 9320).